Here is a 421-residue protein sequence, read N- to C-terminus: Imidazolonepropionase (421 aa).

Fe(3+) is bound by residues His81 and His83. Residues His81 and His83 each coordinate Zn(2+). Positions 90, 153, and 186 each coordinate 4-imidazolone-5-propanoate. Tyr153 lines the N-formimidoyl-L-glutamate pocket. A Fe(3+)-binding site is contributed by His251. Residue His251 participates in Zn(2+) binding. Glu254 lines the 4-imidazolone-5-propanoate pocket. Asp326 contacts Fe(3+). Asp326 contacts Zn(2+). N-formimidoyl-L-glutamate contacts are provided by Asn328 and Gly330. Residue Ser331 coordinates 4-imidazolone-5-propanoate.

This sequence belongs to the metallo-dependent hydrolases superfamily. HutI family. Zn(2+) serves as cofactor. The cofactor is Fe(3+).

It is found in the cytoplasm. The catalysed reaction is 4-imidazolone-5-propanoate + H2O = N-formimidoyl-L-glutamate. It participates in amino-acid degradation; L-histidine degradation into L-glutamate; N-formimidoyl-L-glutamate from L-histidine: step 3/3. Functionally, catalyzes the hydrolytic cleavage of the carbon-nitrogen bond in imidazolone-5-propanoate to yield N-formimidoyl-L-glutamate. It is the third step in the universal histidine degradation pathway. In Streptococcus pyogenes serotype M6 (strain ATCC BAA-946 / MGAS10394), this protein is Imidazolonepropionase.